The sequence spans 116 residues: DNA-directed RNA polymerase subunit omega (116 aa).

It belongs to the RNA polymerase subunit omega family. As to quaternary structure, the RNAP catalytic core consists of 2 alpha, 1 beta, 1 beta' and 1 omega subunit. When a sigma factor is associated with the core the holoenzyme is formed, which can initiate transcription.

It catalyses the reaction RNA(n) + a ribonucleoside 5'-triphosphate = RNA(n+1) + diphosphate. Promotes RNA polymerase assembly. Latches the N- and C-terminal regions of the beta' subunit thereby facilitating its interaction with the beta and alpha subunits. The polypeptide is DNA-directed RNA polymerase subunit omega (Hyphomonas neptunium (strain ATCC 15444)).